Here is a 97-residue protein sequence, read N- to C-terminus: Large ribosomal subunit protein bL28 (97 aa).

The protein belongs to the bacterial ribosomal protein bL28 family.

In Rickettsia peacockii (strain Rustic), this protein is Large ribosomal subunit protein bL28.